Here is a 1028-residue protein sequence, read N- to C-terminus: Pro-apoptotic serine protease nma111 (1028 aa).

The segment at 1–46 (MDLNGETSTKRKRSSVAAPAERPAKHLKPGNSTLTPGDATPANGTV) is disordered. Positions 82 to 266 (VVSIHFCQTC…AATDYFLPLD (185 aa)) are serine protease. Residues His120, Asp151, and Ser233 each act as charge relay system in the active site. PDZ domains are found at residues 289 to 374 (QWIL…LLVQ) and 876 to 957 (VFCG…VTFD). Basic and acidic residues predominate over residues 991–1001 (SHERDRHKDGI). Positions 991-1028 (SHERDRHKDGITPDAANLNPDAMDEVYEEVSDVEPEVD) are disordered. Residues 1012 to 1028 (AMDEVYEEVSDVEPEVD) show a composition bias toward acidic residues.

It belongs to the peptidase S1C family.

It is found in the nucleus. In terms of biological role, nuclear serine protease which mediates apoptosis. This is Pro-apoptotic serine protease nma111 (nma111) from Aspergillus fumigatus (strain ATCC MYA-4609 / CBS 101355 / FGSC A1100 / Af293) (Neosartorya fumigata).